The chain runs to 145 residues: 3-hydroxyacyl-[acyl-carrier-protein] dehydratase FabZ (145 aa).

His51 is an active-site residue.

This sequence belongs to the thioester dehydratase family. FabZ subfamily.

The protein resides in the cytoplasm. It catalyses the reaction a (3R)-hydroxyacyl-[ACP] = a (2E)-enoyl-[ACP] + H2O. Its function is as follows. Involved in unsaturated fatty acids biosynthesis. Catalyzes the dehydration of short chain beta-hydroxyacyl-ACPs and long chain saturated and unsaturated beta-hydroxyacyl-ACPs. The protein is 3-hydroxyacyl-[acyl-carrier-protein] dehydratase FabZ of Staphylococcus haemolyticus (strain JCSC1435).